The following is a 288-amino-acid chain: Undecaprenyl-diphosphatase (288 aa).

Transmembrane regions (helical) follow at residues leucine 11 to isoleucine 31, proline 49 to phenylalanine 69, alanine 94 to isoleucine 114, leucine 129 to leucine 149, leucine 159 to valine 179, alanine 199 to leucine 219, valine 234 to leucine 254, and phenylalanine 265 to leucine 285.

It belongs to the UppP family.

The protein localises to the cell inner membrane. It catalyses the reaction di-trans,octa-cis-undecaprenyl diphosphate + H2O = di-trans,octa-cis-undecaprenyl phosphate + phosphate + H(+). Functionally, catalyzes the dephosphorylation of undecaprenyl diphosphate (UPP). Confers resistance to bacitracin. The protein is Undecaprenyl-diphosphatase of Synechococcus elongatus (strain ATCC 33912 / PCC 7942 / FACHB-805) (Anacystis nidulans R2).